Consider the following 195-residue polypeptide: Glycerol-3-phosphate acyltransferase (195 aa).

Helical transmembrane passes span Gly-4–Leu-24, Gly-53–Ala-73, Thr-80–Phe-100, Leu-110–Ala-130, Phe-133–Leu-153, and Tyr-154–Ile-174.

The protein belongs to the PlsY family. As to quaternary structure, probably interacts with PlsX.

It localises to the cell inner membrane. It catalyses the reaction an acyl phosphate + sn-glycerol 3-phosphate = a 1-acyl-sn-glycero-3-phosphate + phosphate. Its pathway is lipid metabolism; phospholipid metabolism. Its function is as follows. Catalyzes the transfer of an acyl group from acyl-phosphate (acyl-PO(4)) to glycerol-3-phosphate (G3P) to form lysophosphatidic acid (LPA). This enzyme utilizes acyl-phosphate as fatty acyl donor, but not acyl-CoA or acyl-ACP. The protein is Glycerol-3-phosphate acyltransferase of Mesorhizobium japonicum (strain LMG 29417 / CECT 9101 / MAFF 303099) (Mesorhizobium loti (strain MAFF 303099)).